Reading from the N-terminus, the 185-residue chain is Ribosome-recycling factor (185 aa).

Belongs to the RRF family.

It is found in the cytoplasm. In terms of biological role, responsible for the release of ribosomes from messenger RNA at the termination of protein biosynthesis. May increase the efficiency of translation by recycling ribosomes from one round of translation to another. This Kineococcus radiotolerans (strain ATCC BAA-149 / DSM 14245 / SRS30216) protein is Ribosome-recycling factor.